The primary structure comprises 363 residues: tRNA U34 carboxymethyltransferase (363 aa).

Carboxy-S-adenosyl-L-methionine-binding positions include K101, W134, K139, G159, 181–183 (DPS), 221–222 (LE), M237, Y241, and R356.

Belongs to the class I-like SAM-binding methyltransferase superfamily. CmoB family. In terms of assembly, homotetramer.

The enzyme catalyses carboxy-S-adenosyl-L-methionine + 5-hydroxyuridine(34) in tRNA = 5-carboxymethoxyuridine(34) in tRNA + S-adenosyl-L-homocysteine + H(+). Its function is as follows. Catalyzes carboxymethyl transfer from carboxy-S-adenosyl-L-methionine (Cx-SAM) to 5-hydroxyuridine (ho5U) to form 5-carboxymethoxyuridine (cmo5U) at position 34 in tRNAs. In Psychrobacter cryohalolentis (strain ATCC BAA-1226 / DSM 17306 / VKM B-2378 / K5), this protein is tRNA U34 carboxymethyltransferase.